Consider the following 89-residue polypeptide: Small ribosomal subunit protein bS20 (89 aa).

Positions 1–11 are enriched in polar residues; the sequence is MANIKSQIKRN. The segment at 1–22 is disordered; the sequence is MANIKSQIKRNLTNEKRRLRNK.

It belongs to the bacterial ribosomal protein bS20 family.

In terms of biological role, binds directly to 16S ribosomal RNA. The protein is Small ribosomal subunit protein bS20 of Frankia casuarinae (strain DSM 45818 / CECT 9043 / HFP020203 / CcI3).